Consider the following 106-residue polypeptide: Large ribosomal subunit protein eL42 (106 aa).

Residues 1–29 (MVNIPKTRRTYCKGKACRKHTPHKVTQYK) are compositionally biased toward basic residues. Residues 1 to 56 (MVNIPKTRRTYCKGKACRKHTPHKVTQYKKGKDSLSAQGKRRYDRKQSGYGGQTKP) form a disordered region.

It belongs to the eukaryotic ribosomal protein eL42 family.

This chain is Large ribosomal subunit protein eL42 (RPL44), found in Cryptococcus neoformans var. neoformans serotype D (strain B-3501A) (Filobasidiella neoformans).